Reading from the N-terminus, the 502-residue chain is ATP synthase subunit alpha (502 aa).

169–176 (GDRQTGKT) is an ATP binding site.

The protein belongs to the ATPase alpha/beta chains family. F-type ATPases have 2 components, CF(1) - the catalytic core - and CF(0) - the membrane proton channel. CF(1) has five subunits: alpha(3), beta(3), gamma(1), delta(1), epsilon(1). CF(0) has three main subunits: a(1), b(2) and c(9-12). The alpha and beta chains form an alternating ring which encloses part of the gamma chain. CF(1) is attached to CF(0) by a central stalk formed by the gamma and epsilon chains, while a peripheral stalk is formed by the delta and b chains.

It is found in the cell inner membrane. It carries out the reaction ATP + H2O + 4 H(+)(in) = ADP + phosphate + 5 H(+)(out). In terms of biological role, produces ATP from ADP in the presence of a proton gradient across the membrane. The alpha chain is a regulatory subunit. The chain is ATP synthase subunit alpha from Citrifermentans bemidjiense (strain ATCC BAA-1014 / DSM 16622 / JCM 12645 / Bem) (Geobacter bemidjiensis).